The sequence spans 197 residues: dITP/XTP pyrophosphatase (197 aa).

9–14 lines the substrate pocket; it reads TNNLNK. Mg(2+)-binding residues include E42 and D71. D71 acts as the Proton acceptor in catalysis. Substrate-binding positions include S72, 153 to 156, K176, and 181 to 182; these read FGYD and HR.

The protein belongs to the HAM1 NTPase family. As to quaternary structure, homodimer. It depends on Mg(2+) as a cofactor.

The catalysed reaction is XTP + H2O = XMP + diphosphate + H(+). It carries out the reaction dITP + H2O = dIMP + diphosphate + H(+). The enzyme catalyses ITP + H2O = IMP + diphosphate + H(+). Functionally, pyrophosphatase that catalyzes the hydrolysis of nucleoside triphosphates to their monophosphate derivatives, with a high preference for the non-canonical purine nucleotides XTP (xanthosine triphosphate), dITP (deoxyinosine triphosphate) and ITP. Seems to function as a house-cleaning enzyme that removes non-canonical purine nucleotides from the nucleotide pool, thus preventing their incorporation into DNA/RNA and avoiding chromosomal lesions. The protein is dITP/XTP pyrophosphatase of Leptospira interrogans serogroup Icterohaemorrhagiae serovar copenhageni (strain Fiocruz L1-130).